The chain runs to 351 residues: MGITVRNLHKRFGEFAALDDVSLDFPAGELVALLGPSGCGKTTLLRVIAGLEHADSGQVVLQGLDVASVGARERQVGFVFQHYALFRHMTVFENVAFGLRVKPRRERPSEAAIRAKVHELLSLVQLDWLAQRYPSELSGGQRQRIALARALAVEPKVLLLDEPFGALDAKVRKELRGWLRRLHDDLHISTIFVTHDQEEALEVADRIVVLNHGRVEQVGSPQAVYDHPRSAFVYEFLGAANRLDGTVSGNGFVAHGAAQAIAVDADFAGPARAYVRPHDLELAAPHARAQGIAADVRRVVPLGGSVRVELAARSGEVLEAELDRNAWRALALDVGDALTAVPRAVRVFPAR.

Residues 3–237 (ITVRNLHKRF…PRSAFVYEFL (235 aa)) form the ABC transporter domain. ATP is bound at residue 35–42 (GPSGCGKT).

This sequence belongs to the ABC transporter superfamily. Sulfate/tungstate importer (TC 3.A.1.6) family. As to quaternary structure, the complex is composed of two ATP-binding proteins (CysA), two transmembrane proteins (CysT and CysW) and a solute-binding protein (CysP).

The protein resides in the cell inner membrane. It catalyses the reaction sulfate(out) + ATP + H2O = sulfate(in) + ADP + phosphate + H(+). The catalysed reaction is thiosulfate(out) + ATP + H2O = thiosulfate(in) + ADP + phosphate + H(+). In terms of biological role, part of the ABC transporter complex CysAWTP involved in sulfate/thiosulfate import. Responsible for energy coupling to the transport system. The polypeptide is Sulfate/thiosulfate import ATP-binding protein CysA (Burkholderia mallei (strain ATCC 23344)).